We begin with the raw amino-acid sequence, 909 residues long: Disintegrin and metalloproteinase domain-containing protein 12 (909 aa).

Residues 1–28 form the signal peptide; sequence MAARPLPVSPARALLLALAGALLAPCEA. Residues 29 to 207 constitute a propeptide that is removed on maturation; that stretch reads RGVSLWNQGR…SQTWARRHKR (179 aa). Residues Asn111 and Asn149 are each glycosylated (N-linked (GlcNAc...) asparagine). Residues 177–184 carry the Cysteine switch motif; it reads GSCGSHHN. Zn(2+) contacts are provided by Cys179 and His350. Residues 208 to 708 lie on the Extracellular side of the membrane; it reads ETLKATKYVE…GPIRQADNQG (501 aa). A Peptidase M12B domain is found at 214-416; that stretch reads KYVELVIVAD…GMGVCLFNLP (203 aa). 3 cysteine pairs are disulfide-bonded: Cys325-Cys411, Cys367-Cys395, and Cys369-Cys378. The active site involves Glu351. Zn(2+) is bound by residues His354 and His360. Residues Asn381 and Asn452 are each glycosylated (N-linked (GlcNAc...) asparagine). The Disintegrin domain occupies 424-510; sequence GQKCGNRFVE…HCPANVYLHD (87 aa). The cysteines at positions 482 and 502 are disulfide-linked. Asn651 is a glycosylation site (N-linked (GlcNAc...) asparagine). Residues 656-688 enclose the EGF-like domain; it reads GVHECAMQCHGRGVCNNRKNCHCEAHWAPPFCD. 3 cysteine pairs are disulfide-bonded: Cys660–Cys670, Cys664–Cys676, and Cys678–Cys687. The chain crosses the membrane as a helical span at residues 709–729; it reads LTIGILVTILCLLAAGFVVYL. Over 730–909 the chain is Cytoplasmic; sequence KRKTLIRLLF…PRSTHTAYIK (180 aa). Residues 822–862 form a disordered region; it reads LHRAPRAPSVPARPLPAKPALRQAQGTCKPNPPQKPLPADP. The short motif at 828 to 834 is the SH3-binding; class II element; sequence APSVPAR. The SH3-binding; class I signature appears at 834–841; sequence RPLPAKPA. Positions 851-860 are enriched in pro residues; that stretch reads PNPPQKPLPA. The SH3-binding; class I signature appears at 885–891; that stretch reads RLAPLRP. The residue at position 907 (Tyr907) is a Phosphotyrosine; by SRC.

In terms of assembly, interacts with alpha-actinin-2 and with syndecans. Interacts with SH3PXD2A. Interacts with FST3. Interacts with RACK1; the interaction is required for PKC-dependent translocation of ADAM12 to the cell membrane. It depends on Zn(2+) as a cofactor. In terms of processing, the precursor is cleaved by a furin endopeptidase. As to expression, isoform 1 is expressed in placenta and skeletal, cardiac, and smooth muscle. Isoform 2 seems to be expressed only in placenta or in embryo and fetus. Both forms were expressed in some tumor cells lines. Not detected in brain, lung, liver, kidney or pancreas.

It is found in the cell membrane. The protein localises to the secreted. Its function is as follows. Involved in skeletal muscle regeneration, specifically at the onset of cell fusion. Also involved in macrophage-derived giant cells (MGC) and osteoclast formation from mononuclear precursors. This chain is Disintegrin and metalloproteinase domain-containing protein 12 (ADAM12), found in Homo sapiens (Human).